The sequence spans 410 residues: MDGAHSAGLQLQPLPPTSGATSTSLSSSEGSFSYKENLIGALLAIFGHLVVSIALNLQKYCHIRLAGSKDPRAYFKTKTWWLGLLLLLLGELGVFASYAFAPLSLIVPLSAVSVIASAIIGIIFIKEKWKPKDFVRRYVLSFVGCGLAIVGTYLLVTFAPNSHEKMTGENIARHLVSWPFLLYMLVAIVLFCLLLYFYKERNANSIVVILLLVALLGSMTVVTVKAVSGMLVLSIQGNLQLDYPIFYVMFVCMVATAIYQATFLSEASQIYDSSLIASVGYILSTTAAITAGAIFYLDFLGEEALHICMFALGCLIAFLGVFLITRNRKKAIPFEPYISMDAMPGMQDMHAKGTTVQPDLKASFSYGALESNDSISELYTPATLPVMQEEHSSRSTPGVPYRVLEHTKKE.

Residues 1–24 (MDGAHSAGLQLQPLPPTSGATSTS) form a disordered region. The next 9 helical transmembrane spans lie at 37-57 (NLIGALLAIFGHLVVSIALNL), 80-100 (WWLGLLLLLLGELGVFASYAF), 105-125 (LIVPLSAVSVIASAIIGIIFI), 139-159 (VLSFVGCGLAIVGTYLLVTFA), 175-195 (LVSWPFLLYMLVAIVLFCLLL), 206-226 (IVVILLLVALLGSMTVVTVKA), 244-264 (PIFYVMFVCMVATAIYQATFL), 275-295 (LIASVGYILSTTAAITAGAIF), and 304-324 (ALHICMFALGCLIAFLGVFLI). Phosphoserine is present on Ser376. The segment at 389–410 (EEHSSRSTPGVPYRVLEHTKKE) is disordered.

It belongs to the NIPA family.

Its subcellular location is the membrane. The chain is NIPA-like protein 3 (Nipal3) from Mus musculus (Mouse).